The sequence spans 74 residues: U2-sicaritoxin-Sdo1a (74 aa).

An N-terminal signal peptide occupies residues 1–20; it reads MKLSFCFFLCAIVLFSFAEA. Positions 21 to 39 are excised as a propeptide; it reads RINPNQLKRLRELVRDDEP. Intrachain disulfides connect C42-C59, C49-C62, and C58-C71.

As to expression, expressed by the venom gland.

The protein localises to the secreted. This is U2-sicaritoxin-Sdo1a from Hexophthalma dolichocephala (Afrotropical spider).